The sequence spans 285 residues: 4-diphosphocytidyl-2-C-methyl-D-erythritol kinase (285 aa).

Lysine 12 is a catalytic residue. 95–105 (PMGGGVGGGSS) serves as a coordination point for ATP. The active site involves aspartate 137.

This sequence belongs to the GHMP kinase family. IspE subfamily.

It catalyses the reaction 4-CDP-2-C-methyl-D-erythritol + ATP = 4-CDP-2-C-methyl-D-erythritol 2-phosphate + ADP + H(+). It participates in isoprenoid biosynthesis; isopentenyl diphosphate biosynthesis via DXP pathway; isopentenyl diphosphate from 1-deoxy-D-xylulose 5-phosphate: step 3/6. Functionally, catalyzes the phosphorylation of the position 2 hydroxy group of 4-diphosphocytidyl-2C-methyl-D-erythritol. The sequence is that of 4-diphosphocytidyl-2-C-methyl-D-erythritol kinase from Actinobacillus pleuropneumoniae serotype 7 (strain AP76).